We begin with the raw amino-acid sequence, 248 residues long: tRNA (guanine-N(1)-)-methyltransferase (248 aa).

S-adenosyl-L-methionine is bound by residues Gly-113 and 133 to 138; that span reads IGDYVL.

Belongs to the RNA methyltransferase TrmD family. Homodimer.

The protein resides in the cytoplasm. It catalyses the reaction guanosine(37) in tRNA + S-adenosyl-L-methionine = N(1)-methylguanosine(37) in tRNA + S-adenosyl-L-homocysteine + H(+). Specifically methylates guanosine-37 in various tRNAs. The polypeptide is tRNA (guanine-N(1)-)-methyltransferase (Shewanella frigidimarina (strain NCIMB 400)).